Reading from the N-terminus, the 736-residue chain is Myosin-7 (736 aa).

The Myosin motor domain occupies 1–342 (NWMVTRINAT…LLGLLEEMRD (342 aa)). An actin-binding region spans residues 219–241 (LNKLMTNLRSTHPHFVRCIIPNE). Positions 345 to 374 (LSRIITRIQAQSRGVLSRMEYKKLLERRDS) constitute an IQ domain. The stretch at 403–736 (LLKSAETEKE…MNKKREAEFQ (334 aa)) forms a coiled coil. Position 701 is a phosphoserine (Ser701). The disordered stretch occupies residues 716–736 (EAGGATSVQIEMNKKREAEFQ). Over residues 727 to 736 (MNKKREAEFQ) the composition is skewed to basic and acidic residues.

Belongs to the TRAFAC class myosin-kinesin ATPase superfamily. Myosin family. In terms of assembly, muscle myosin is a hexameric protein that consists of 2 heavy chain subunits (MHC), 2 alkali light chain subunits (MLC) and 2 regulatory light chain subunits (MLC-2). Interacts with ECPAS. Interacts (via C-terminus) with LRRC39.

The protein localises to the cytoplasm. Its subcellular location is the myofibril. The protein resides in the sarcomere. In terms of biological role, myosins are actin-based motor molecules with ATPase activity essential for muscle contraction. Forms regular bipolar thick filaments that, together with actin thin filaments, constitute the fundamental contractile unit of skeletal and cardiac muscle. The polypeptide is Myosin-7 (MYH7) (Oryctolagus cuniculus (Rabbit)).